Consider the following 507-residue polypeptide: Phosphoprotein (507 aa).

Residues 1–48 (MAEEQARHVKNGLECIRALKAEPIGSLAIEEAMAAWSEISDNPGQERA) are interaction with N0. 4 disordered regions span residues 41–99 (DNPG…PPRN), 134–163 (GLDGDSTLSGGDNESENSDVDIGEPDTEGY), 201–231 (NNFPKLGKTLNVPPPPDPGRASTSGTPIKKG), and 250–273 (GATQCARKSPSEPSGPGAPAGNVP). Serine 86 carries the post-translational modification Phosphoserine. Residues 134 to 145 (GLDGDSTLSGGD) are compositionally biased toward low complexity. The span at 146 to 160 (NESENSDVDIGEPDT) shows a compositional bias: acidic residues. Residue serine 151 is modified to Phosphoserine. Low complexity predominate over residues 260 to 270 (SEPSGPGAPAG). A multimerization region spans residues 304 to 376 (GDYYDDELFS…LSSIMIAIPG (73 aa)). Interaction with the L polymerase stretches follow at residues 361 to 377 (STLEGHLSSIMIAIPGL) and 396 to 410 (PIIGRDSGRALAEVL). A x domain (XD) region spans residues 457-507 (GPASRSVIRSIIKSSRLEEDRKRYLMTLLDDIKGANDLAKFHQMLMKIIMK). Residues 459–507 (ASRSVIRSIIKSSRLEEDRKRYLMTLLDDIKGANDLAKFHQMLMKIIMK) form an interaction with the nucleocapsid (N-RNA) region.

It belongs to the morbillivirus P protein family. As to quaternary structure, homotetramer. Interacts (via multimerization domain and XD domain) with polymerase L; this interaction forms the polymerase L-P complex. Interacts (via N-terminus) with N0 (via Ncore); this interaction allows P to chaperon N0 to avoid N polymerization and non-specific RNA binding before encapsidation. Interacts (via C-terminus) with N-RNA template (via Ntail); this interaction maintains the P/L complex anchored to the nucleocapsid template during the sequential transcription. Interacts (via C-terminus) with protein C this interaction allows C to associate with the ribonucleocapsid. In terms of processing, phosphorylation on serines by host CK2 is necessary for the formation of viral factories.

Essential cofactor of the RNA polymerase L that plays a central role in the transcription and replication by forming the polymerase complex with RNA polymerase L and recruiting L to the genomic N-RNA template for RNA synthesis. Also plays a central role in the encapsidation of nascent RNA chains by forming the encapsidation complex with the nucleocapsid protein N (N-P complex). Acts as a chaperone for newly synthesized free N protein, so-called N0, allowing encapsidation of nascent RNA chains during replication. The nucleoprotein protein N prevents excessive phosphorylation of P, which leads to down-regulation of viral transcription/ replication. Participates, together with N, in the formation of viral factories (viroplasms), which are large inclusions in the host cytoplasm where replication takes place. The chain is Phosphoprotein (P/V) from Measles virus (strain Edmonston-AIK-C vaccine) (MeV).